The primary structure comprises 323 residues: tRNA U34 carboxymethyltransferase (323 aa).

Carboxy-S-adenosyl-L-methionine-binding positions include K91, W105, K110, G130, 181 to 182, M196, Y200, and R315; that span reads IE.

This sequence belongs to the class I-like SAM-binding methyltransferase superfamily. CmoB family. Homotetramer.

It catalyses the reaction carboxy-S-adenosyl-L-methionine + 5-hydroxyuridine(34) in tRNA = 5-carboxymethoxyuridine(34) in tRNA + S-adenosyl-L-homocysteine + H(+). Functionally, catalyzes carboxymethyl transfer from carboxy-S-adenosyl-L-methionine (Cx-SAM) to 5-hydroxyuridine (ho5U) to form 5-carboxymethoxyuridine (cmo5U) at position 34 in tRNAs. The chain is tRNA U34 carboxymethyltransferase from Yersinia pestis bv. Antiqua (strain Antiqua).